Consider the following 282-residue polypeptide: Phosphatidylserine decarboxylase proenzyme (282 aa).

Residues Asp88, His144, and Ser247 each act as charge relay system; for autoendoproteolytic cleavage activity in the active site. The active-site Schiff-base intermediate with substrate; via pyruvic acid; for decarboxylase activity is the Ser247. The residue at position 247 (Ser247) is a Pyruvic acid (Ser); by autocatalysis.

This sequence belongs to the phosphatidylserine decarboxylase family. PSD-B subfamily. Prokaryotic type I sub-subfamily. As to quaternary structure, heterodimer of a large membrane-associated beta subunit and a small pyruvoyl-containing alpha subunit. The cofactor is pyruvate. Post-translationally, is synthesized initially as an inactive proenzyme. Formation of the active enzyme involves a self-maturation process in which the active site pyruvoyl group is generated from an internal serine residue via an autocatalytic post-translational modification. Two non-identical subunits are generated from the proenzyme in this reaction, and the pyruvate is formed at the N-terminus of the alpha chain, which is derived from the carboxyl end of the proenzyme. The autoendoproteolytic cleavage occurs by a canonical serine protease mechanism, in which the side chain hydroxyl group of the serine supplies its oxygen atom to form the C-terminus of the beta chain, while the remainder of the serine residue undergoes an oxidative deamination to produce ammonia and the pyruvoyl prosthetic group on the alpha chain. During this reaction, the Ser that is part of the protease active site of the proenzyme becomes the pyruvoyl prosthetic group, which constitutes an essential element of the active site of the mature decarboxylase.

Its subcellular location is the cell membrane. The catalysed reaction is a 1,2-diacyl-sn-glycero-3-phospho-L-serine + H(+) = a 1,2-diacyl-sn-glycero-3-phosphoethanolamine + CO2. It participates in phospholipid metabolism; phosphatidylethanolamine biosynthesis; phosphatidylethanolamine from CDP-diacylglycerol: step 2/2. Functionally, catalyzes the formation of phosphatidylethanolamine (PtdEtn) from phosphatidylserine (PtdSer). The chain is Phosphatidylserine decarboxylase proenzyme from Xanthomonas oryzae pv. oryzae (strain KACC10331 / KXO85).